Reading from the N-terminus, the 129-residue chain is Small ribosomal subunit protein uS11 (129 aa).

It belongs to the universal ribosomal protein uS11 family. Part of the 30S ribosomal subunit. Interacts with proteins S7 and S18. Binds to IF-3.

In terms of biological role, located on the platform of the 30S subunit, it bridges several disparate RNA helices of the 16S rRNA. Forms part of the Shine-Dalgarno cleft in the 70S ribosome. The protein is Small ribosomal subunit protein uS11 of Cereibacter sphaeroides (strain ATCC 17025 / ATH 2.4.3) (Rhodobacter sphaeroides).